The chain runs to 257 residues: MLSKRIIPCLDVKDGQVVKGVKFKGHEVVGDILTMAKAYSEAGADELVFYEISASVEKRLLDVNWVESIARHIDIPFCVAGGIKSVADAARVLERGADKISINSPAIARPELIKELHDEFGKQCVVVGIDSFYDEVTGEYLVYQLTGDPNASSRTRYKTQEWVKRVQDLGAGEIVLNCMNQDGVRNGYDIEQLSKIRELCNIPLIASGGAGSMQDFVDVFKQSEVDGALAASVFHKNVINIGELKQFLTNNQVAARL.

Residues D11 and D130 contribute to the active site.

Belongs to the HisA/HisF family. In terms of assembly, heterodimer of HisH and HisF.

The protein localises to the cytoplasm. It catalyses the reaction 5-[(5-phospho-1-deoxy-D-ribulos-1-ylimino)methylamino]-1-(5-phospho-beta-D-ribosyl)imidazole-4-carboxamide + L-glutamine = D-erythro-1-(imidazol-4-yl)glycerol 3-phosphate + 5-amino-1-(5-phospho-beta-D-ribosyl)imidazole-4-carboxamide + L-glutamate + H(+). The protein operates within amino-acid biosynthesis; L-histidine biosynthesis; L-histidine from 5-phospho-alpha-D-ribose 1-diphosphate: step 5/9. Its function is as follows. IGPS catalyzes the conversion of PRFAR and glutamine to IGP, AICAR and glutamate. The HisF subunit catalyzes the cyclization activity that produces IGP and AICAR from PRFAR using the ammonia provided by the HisH subunit. The polypeptide is Imidazole glycerol phosphate synthase subunit HisF (Pseudoalteromonas translucida (strain TAC 125)).